Reading from the N-terminus, the 846-residue chain is Major vault protein beta (846 aa).

An N-acetylalanine modification is found at Ala-2. MVP repeat units lie at residues 2 to 60 (ATPV…IPPR), 61 to 115 (QYCI…QPVP), 116 to 172 (LQVI…EPVR), 173 to 225 (AVII…GFIQ), 226 to 280 (ALVL…RDIK), 281 to 332 (AITL…IQNV), 333 to 388 (NVLS…RRKR), 389 to 458 (IPLD…STKV), and 459 to 521 (ITYR…FLGP).

As to quaternary structure, the vault ribonucleoprotein particle is a huge (400 A x 670 A) cage structure of 12.9 MDa. It consists of a dimer of half-vaults, with each half-vault comprising 39 identical major vault protein (MVP) chains. Dictyostelium is one of the few organisms in which the major component is actually two proteins (alpha and beta).

It localises to the cytoplasm. It is found in the nucleus. In terms of biological role, unknown, though MVP-beta is required for normal vault structure. The protein is Major vault protein beta (mvpB) of Dictyostelium discoideum (Social amoeba).